A 453-amino-acid chain; its full sequence is T-box transcription factor T homolog (453 aa).

Positions L47–D217 form a DNA-binding region, T-box. The tract at residues R283–A304 is disordered.

It localises to the nucleus. Functionally, may be involved in the transcriptional regulation of genes required for gastrulation. In Patiria pectinifera (Starfish), this protein is T-box transcription factor T homolog.